Here is an 807-residue protein sequence, read N- to C-terminus: Glycerol-3-phosphate acyltransferase (807 aa).

An HXXXXD motif motif is present at residues 308–313 (CHRSHM).

Belongs to the GPAT/DAPAT family.

It localises to the cell inner membrane. It catalyses the reaction sn-glycerol 3-phosphate + an acyl-CoA = a 1-acyl-sn-glycero-3-phosphate + CoA. Its pathway is phospholipid metabolism; CDP-diacylglycerol biosynthesis; CDP-diacylglycerol from sn-glycerol 3-phosphate: step 1/3. This is Glycerol-3-phosphate acyltransferase from Shewanella halifaxensis (strain HAW-EB4).